We begin with the raw amino-acid sequence, 345 residues long: MSNYWLNIYKPRGISSAQLVSIVKKILGRTKIGHAGTLDVEAEGILPFAVGEATKLIHLLIDARKTYIFTVKFGMQTNSGDCAGKVIATKYCVPSQEEAYAVCSKFIGNVTQIPPAFSALKVNGVRAYKLAREEKKVELKPRNTTIYDLKCLNFDEKNATATYYTECSKGTYIRTLAEDLALSLQSLGFVIELRRTQVGIFKEENAIRIKSPDEITKNALEEKSIKIEAILDDILVLDATDSQAQQIKYGQKCLFNYEKDFRHLAKFAYREEFKGNTERSTTAYTLVREDASTGLTYKLPLEVEFGKMSIDLVWVRYKGTLLAIGSLNKSCFNSLRVFNLTQDFF.

Asp39 serves as the catalytic Nucleophile.

It belongs to the pseudouridine synthase TruB family. Type 1 subfamily.

It carries out the reaction uridine(55) in tRNA = pseudouridine(55) in tRNA. Its function is as follows. Responsible for synthesis of pseudouridine from uracil-55 in the psi GC loop of transfer RNAs. This is tRNA pseudouridine synthase B from Rickettsia peacockii (strain Rustic).